The following is an 851-amino-acid chain: Envelope glycoprotein gp160 (851 aa).

The signal sequence occupies residues 1-24 (MEPGRNQLLVAILLTSACLIYCKQ). At 25-669 (YVTVFYGIPA…LTSWIKYIQY (645 aa)) the chain is on the extracellular side. Asn37 is a glycosylation site (N-linked (GlcNAc...) asparagine; by host). Cys44 and Cys57 are disulfide-bonded. N-linked (GlcNAc...) asparagine; by host glycans are attached at residues Asn70, Asn114, Asn127, Asn134, Asn142, Asn157, Asn184, Asn195, Asn227, Asn230, Asn261, Asn267, Asn278, Asn289, Asn299, Asn355, Asn361, Asn388, Asn398, Asn401, Asn438, Asn453, and Asn456. 5 disulfides stabilise this stretch: Cys101/Cys203, Cys108/Cys194, Cys113/Cys154, Cys216/Cys246, and Cys226/Cys238. The interval 113-153 (CNITSGTTATPSPPNITIIDENSTCIGDNNCTGLGKEEVVE) is V1. The tract at residues 154–194 (CEFNMTGLEQDKKRKYNDAWYSRDVVCDKTNGTGTCYMRHC) is V2. Residues 294–327 (CKRPGNKTVVPITLMSGRRFHSRPVYNKKPGQAW) are V3. A disulfide bond links Cys294 and Cys328. 2 cysteine pairs are disulfide-bonded: Cys380-Cys437 and Cys387-Cys410. Residues 387-410 (CNMTWFLNWVENKTNQTHGNYAPC) are V4. The V5 stretch occupies residues 453 to 459 (NQTNITF). Residues 502–522 (GVFVLGFLGFLATAGSAMGGA) are fusion peptide. Residues 565–581 (LQARVTAIEKYLKDQAQ) form an immunosuppression region. N-linked (GlcNAc...) asparagine; by host glycans are attached at residues Asn601, Asn610, and Asn626. Residues 647–668 (KLNSWDVFGNWFDLTSWIKYIQ) form an MPER; binding to GalCer region. A helical membrane pass occupies residues 670-690 (GVYIVVGIIGLRIAIYIVQLL). The Cytoplasmic portion of the chain corresponds to 691–851 (SRLRKGYRPV…IRQGAEIALL (161 aa)). The short motif at 697 to 700 (YRPV) is the YXXV motif; contains endocytosis signal element. Cys763 carries S-palmitoyl cysteine; by host lipidation. A Di-leucine internalization motif motif is present at residues 850 to 851 (LL).

The mature envelope protein (Env) consists of a homotrimer of non-covalently associated gp120-gp41 heterodimers. The resulting complex protrudes from the virus surface as a spike. There seems to be as few as 10 spikes on the average virion. Interacts with human CD4, CCR5 and CXCR4, to form a P4HB/PDI-CD4-CXCR4-gp120 complex. Gp120 also interacts with the C-type lectins CD209/DC-SIGN and CLEC4M/DC-SIGNR (collectively referred to as DC-SIGN(R)). Gp120 and gp41 interact with GalCer. As to quaternary structure, the mature envelope protein (Env) consists of a homotrimer of non-covalently associated gp120-gp41 heterodimers. The resulting complex protrudes from the virus surface as a spike. There seems to be as few as 10 spikes on the average virion. Post-translationally, specific enzymatic cleavages in vivo yield mature proteins. Envelope glycoproteins are synthesized as an inactive precursor that is heavily N-glycosylated and processed likely by host cell furin in the Golgi to yield the mature SU and TM proteins. The cleavage site between SU and TM requires the minimal sequence [KR]-X-[KR]-R. Palmitoylation of the transmembrane protein and of Env polyprotein (prior to its proteolytic cleavage) is essential for their association with host cell membrane lipid rafts. Palmitoylation is therefore required for envelope trafficking to classical lipid rafts, but not for viral replication.

The protein localises to the virion membrane. Its subcellular location is the host cell membrane. It localises to the host endosome membrane. Functionally, the surface protein gp120 (SU) attaches the virus to the host lymphoid cell by binding to the primary receptor CD4. This interaction induces a structural rearrangement creating a high affinity binding site for a chemokine coreceptor like CXCR4 and/or CCR5. This peculiar 2 stage receptor-interaction strategy allows gp120 to maintain the highly conserved coreceptor-binding site in a cryptic conformation, protected from neutralizing antibodies. Since CD4 also displays a binding site for the disulfide-isomerase P4HB/PDI, a P4HB/PDI-CD4-CXCR4-gp120 complex may form. In that complex, P4HB/PDI could reach and reduce gp120 disulfide bonds, causing major conformational changes in gp120. TXN, another PDI family member could also be involved in disulfide rearrangements in Env during fusion. These changes are transmitted to the transmembrane protein gp41 and are thought to activate its fusogenic potential by unmasking its fusion peptide. In terms of biological role, the surface protein gp120 is a ligand for CD209/DC-SIGN and CLEC4M/DC-SIGNR, which are respectively found on dendritic cells (DCs), and on endothelial cells of liver sinusoids and lymph node sinuses. These interactions allow capture of viral particles at mucosal surfaces by these cells and subsequent transmission to permissive cells. DCs are professional antigen presenting cells, critical for host immunity by inducing specific immune responses against a broad variety of pathogens. They act as sentinels in various tissues where they take up antigen, process it, and present it to T-cells following migration to lymphoid organs. HIV subverts the migration properties of dendritic cells to gain access to CD4+ T-cells in lymph nodes. Virus transmission to permissive T-cells occurs either in trans (without DCs infection, through viral capture and transmission), or in cis (following DCs productive infection, through the usual CD4-gp120 interaction), thereby inducing a robust infection. In trans infection, bound virions remain infectious over days and it is proposed that they are not degraded, but protected in non-lysosomal acidic organelles within the DCs close to the cell membrane thus contributing to the viral infectious potential during DCs' migration from the periphery to the lymphoid tissues. On arrival at lymphoid tissues, intact virions recycle back to DCs' cell surface allowing virus transmission to CD4+ T-cells. Virion capture also seems to lead to MHC-II-restricted viral antigen presentation, and probably to the activation of HIV-specific CD4+ cells. The transmembrane protein gp41 (TM) acts as a class I viral fusion protein. Under the current model, the protein has at least 3 conformational states: pre-fusion native state, pre-hairpin intermediate state, and post-fusion hairpin state. During fusion of viral and target intracellular membranes, the coiled coil regions (heptad repeats) assume a trimer-of-hairpins structure, positioning the fusion peptide in close proximity to the C-terminal region of the ectodomain. The formation of this structure appears to drive apposition and subsequent fusion of viral and target cell membranes. Complete fusion occurs in host cell endosomes and is dynamin-dependent, however some lipid transfer might occur at the plasma membrane. The virus undergoes clathrin-dependent internalization long before endosomal fusion, thus minimizing the surface exposure of conserved viral epitopes during fusion and reducing the efficacy of inhibitors targeting these epitopes. Membranes fusion leads to delivery of the nucleocapsid into the cytoplasm. Its function is as follows. The envelope glycoprotein gp160 precursor down-modulates cell surface CD4 antigen by interacting with it in the endoplasmic reticulum and blocking its transport to the cell surface. Functionally, the gp120-gp41 heterodimer seems to contribute to T-cell depletion during HIV-1 infection. The envelope glycoproteins expressed on the surface of infected cells induce apoptosis through an interaction with uninfected cells expressing the receptor (CD4) and the coreceptors CXCR4 or CCR5. This type of bystander killing may be obtained by at least three distinct mechanisms. First, the interaction between the 2 cells can induce cellular fusion followed by nuclear fusion within the syncytium. Syncytia are condemned to die from apoptosis. Second, the 2 interacting cells may not fuse entirely and simply exchange plasma membrane lipids, after a sort of hemifusion process, followed by rapid death. Third, it is possible that virus-infected cells, on the point of undergoing apoptosis, fuse with CD4-expressing cells, in which case apoptosis is rapidly transmitted from one cell to the other and thus occurs in a sort of contagious fashion. In terms of biological role, the gp120-gp41 heterodimer allows rapid transcytosis of the virus through CD4 negative cells such as simple epithelial monolayers of the intestinal, rectal and endocervical epithelial barriers. Both gp120 and gp41 specifically recognize glycosphingolipids galactosyl-ceramide (GalCer) or 3' sulfo-galactosyl-ceramide (GalS) present in the lipid rafts structures of epithelial cells. Binding to these alternative receptors allows the rapid transcytosis of the virus through the epithelial cells. This transcytotic vesicle-mediated transport of virions from the apical side to the basolateral side of the epithelial cells does not involve infection of the cells themselves. The polypeptide is Envelope glycoprotein gp160 (env) (Human immunodeficiency virus type 2 subtype A (isolate D194) (HIV-2)).